Reading from the N-terminus, the 828-residue chain is Potassium channel SKOR (828 aa).

At 1–86 (MGGSSGGGVS…PDNRWYKAWT (86 aa)) the chain is on the cytoplasmic side. A helical membrane pass occupies residues 87 to 107 (MFILIWALYSSFFTPLEFGFF). Over 108 to 114 (RGLPENL) the chain is Extracellular. The chain crosses the membrane as a helical span at residues 115–135 (FILDIAGQIAFLVDIVLTFFV). Residues 136–158 (AYRDSRTYRMIYKRSSIALRYLK) are Cytoplasmic-facing. Residues 159–179 (STFIIDLLACMPWDIIYKAAG) form a helical membrane-spanning segment. The Extracellular portion of the chain corresponds to 180–185 (EKEEVR). Residues 186-206 (YLLLIRLYRVHRVILFFHKME) form a helical; Voltage-sensor membrane-spanning segment. The Cytoplasmic portion of the chain corresponds to 207-220 (KDIRINYLFTRIVK). A helical transmembrane segment spans residues 221–241 (LIFVELYCTHTAACIFYYLAT). Residues 242-276 (TLPASQEGYTWIGSLKLGDYSYSKFREIDLWTRYT) lie on the Extracellular side of the membrane. An intramembrane region (pore-forming) is located at residues 277-296 (TSMYFAVVTMATVGYGDIHA). At 297 to 300 (VNMR) the chain is on the extracellular side. Residues 301–321 (EMIFAMVYISFDMILGAYLIG) traverse the membrane as a helical segment. Over 322–828 (NMTALIVKGS…GQKLYLAVET (507 aa)) the chain is Cytoplasmic. Residue 403–523 (LFRGCSSEFI…RRILNNLLEG (121 aa)) coordinates a nucleoside 3',5'-cyclic phosphate. ANK repeat units follow at residues 545 to 576 (EAELALKLNSAAFYGDLYQLKSLIRAGGDPNK), 580 to 609 (DGRSPLHLAASRGYEDITLYLIQESVDVNI), 613 to 642 (LGSTPLLEAIKNGNDRVAALLVKEGATLNI), 644 to 673 (NAGTFLCTVVAKGDSDFLKRLLSNGIDPNS), 677 to 706 (DHRTPLHVAASEGFYVLAIQLVEASANVLA), and 710 to 740 (WGNTPLDEALGCGNKMLIKLLEDAKNSQISS). One can recognise a KHA domain in the interval 756–828 (KCTVYFSHPG…GQKLYLAVET (73 aa)).

It belongs to the potassium channel family. Plant (TC 1.A.1.4) subfamily. In terms of assembly, the potassium channel is probably composed of a homo- or heterotetrameric complex of pore-forming subunits. In terms of tissue distribution, expressed in root pericycle and xylem parenchyma, and in flower at a lower level.

It localises to the membrane. In terms of biological role, highly selective outward-rectifying potassium channel. Involved in potassium release into the xylem sap toward the shoots. Assuming opened or closed conformations in response to the voltage difference across the membrane, the channel is activated by depolarization. The voltage-dependence of the channel is abolished by internal or external acidification. May interact with the cytoskeleton or with regulatory proteins. This chain is Potassium channel SKOR (SKOR), found in Arabidopsis thaliana (Mouse-ear cress).